The following is a 79-amino-acid chain: UPF0181 protein PC1_1931 (79 aa).

The interval 54-79 is disordered; it reads FDEDDDTVNDSDEEHYFDDGEEEDEQ.

Belongs to the UPF0181 family.

This chain is UPF0181 protein PC1_1931, found in Pectobacterium carotovorum subsp. carotovorum (strain PC1).